We begin with the raw amino-acid sequence, 20 residues long: Zinc metalloproteinase-disintegrin-like uracoina-1 (20 aa).

It belongs to the venom metalloproteinase (M12B) family. P-III subfamily. As to quaternary structure, monomer. Zn(2+) serves as cofactor. Expressed by the venom gland.

It localises to the secreted. Its activity is regulated as follows. Inhibited by ethylenediaminetetraacetic acid (EDTA) and 1,10-phenanthroline. Not inhibited by tosyl-L-lysine chloromethyl ketone (TCLK) and phenylmethanesulfonylfluoride (PMSF). Its function is as follows. Snake venom zinc metalloprotease that possesses hemorrhagic activity (minimum hemorrhagic dose, MHD=4.7 ug) when injected intradermally into mice. Degrades the alpha-chain of fibrinogen (FGA). In Crotalus vegrandis (Uracoan rattlesnake), this protein is Zinc metalloproteinase-disintegrin-like uracoina-1.